Consider the following 459-residue polypeptide: UNC93-like protein 1 (459 aa).

Residues 1 to 26 (MNVRDEGKTTAEKHGGGEENKSPENK) are disordered. 11 consecutive transmembrane segments (helical) span residues 38–58 (LMGF…GMGG), 73–93 (AVYT…NVLG), 96–116 (LTLA…LYYN), 122–142 (AFAI…WAGE), 159–179 (IALF…IPFI), 195–215 (YIAF…ILPA), 251–271 (LLIV…FNNV), 287–307 (FYWG…DFSF), 314–334 (GFTG…GGLA), 355–375 (GIEF…DAMY), and 425–445 (LIVN…LVYF).

Belongs to the unc-93 family.

Its subcellular location is the membrane. This chain is UNC93-like protein 1, found in Arabidopsis thaliana (Mouse-ear cress).